A 423-amino-acid polypeptide reads, in one-letter code: GTPase Obg (423 aa).

The Obg domain occupies 1 to 158; that stretch reads MFYDEAKIYV…RWLVLELKLL (158 aa). Residues 159-328 enclose the OBG-type G domain; that stretch reads ADVGLIGLPN…LLYHVSGLLA (170 aa). GTP-binding positions include 165–172, 190–194, 212–215, 281–284, and 309–311; these read GLPNAGKS, FTTLT, DIPG, NKMD, and SAA. Residues Ser-172 and Thr-192 each contribute to the Mg(2+) site. One can recognise an OCT domain in the interval 336–421; the sequence is VTAPEEEKVT…IGKFEFEYVE (86 aa).

This sequence belongs to the TRAFAC class OBG-HflX-like GTPase superfamily. OBG GTPase family. Monomer. Mg(2+) is required as a cofactor.

The protein resides in the cytoplasm. An essential GTPase which binds GTP, GDP and possibly (p)ppGpp with moderate affinity, with high nucleotide exchange rates and a fairly low GTP hydrolysis rate. Plays a role in control of the cell cycle, stress response, ribosome biogenesis and in those bacteria that undergo differentiation, in morphogenesis control. This Moorella thermoacetica (strain ATCC 39073 / JCM 9320) protein is GTPase Obg.